We begin with the raw amino-acid sequence, 361 residues long: Methionine import ATP-binding protein MetN (361 aa).

Residues 22–257 (VRLIDVKRRF…PQTDITRSLL (236 aa)) enclose the ABC transporter domain. 54 to 61 (GRSGAGKS) contributes to the ATP binding site.

The protein belongs to the ABC transporter superfamily. Methionine importer (TC 3.A.1.24) family. The complex is composed of two ATP-binding proteins (MetN), two transmembrane proteins (MetI) and a solute-binding protein (MetQ).

The protein resides in the cell inner membrane. It catalyses the reaction L-methionine(out) + ATP + H2O = L-methionine(in) + ADP + phosphate + H(+). The catalysed reaction is D-methionine(out) + ATP + H2O = D-methionine(in) + ADP + phosphate + H(+). In terms of biological role, part of the ABC transporter complex MetNIQ involved in methionine import. Responsible for energy coupling to the transport system. The polypeptide is Methionine import ATP-binding protein MetN (Rhizobium etli (strain ATCC 51251 / DSM 11541 / JCM 21823 / NBRC 15573 / CFN 42)).